The chain runs to 360 residues: Ribosomal RNA large subunit methyltransferase F (360 aa).

The interval Met1–Leu38 is disordered. Over residues Arg10–Pro20 the composition is skewed to basic residues.

It belongs to the methyltransferase superfamily. METTL16/RlmF family.

Its subcellular location is the cytoplasm. The enzyme catalyses adenosine(1618) in 23S rRNA + S-adenosyl-L-methionine = N(6)-methyladenosine(1618) in 23S rRNA + S-adenosyl-L-homocysteine + H(+). Functionally, specifically methylates the adenine in position 1618 of 23S rRNA. This Shewanella frigidimarina (strain NCIMB 400) protein is Ribosomal RNA large subunit methyltransferase F.